The chain runs to 312 residues: 4-hydroxy-3-methylbut-2-enyl diphosphate reductase (312 aa).

Residue C15 participates in [4Fe-4S] cluster binding. (2E)-4-hydroxy-3-methylbut-2-enyl diphosphate-binding residues include H44 and H77. 2 residues coordinate dimethylallyl diphosphate: H44 and H77. Isopentenyl diphosphate contacts are provided by H44 and H77. C99 contacts [4Fe-4S] cluster. H127 is a binding site for (2E)-4-hydroxy-3-methylbut-2-enyl diphosphate. H127 is a binding site for dimethylallyl diphosphate. An isopentenyl diphosphate-binding site is contributed by H127. The Proton donor role is filled by E129. T167 contacts (2E)-4-hydroxy-3-methylbut-2-enyl diphosphate. C197 is a [4Fe-4S] cluster binding site. (2E)-4-hydroxy-3-methylbut-2-enyl diphosphate contacts are provided by S225, S226, N227, and S269. Dimethylallyl diphosphate contacts are provided by S225, S226, N227, and S269. Isopentenyl diphosphate is bound by residues S225, S226, N227, and S269.

This sequence belongs to the IspH family. [4Fe-4S] cluster is required as a cofactor.

It carries out the reaction isopentenyl diphosphate + 2 oxidized [2Fe-2S]-[ferredoxin] + H2O = (2E)-4-hydroxy-3-methylbut-2-enyl diphosphate + 2 reduced [2Fe-2S]-[ferredoxin] + 2 H(+). It catalyses the reaction dimethylallyl diphosphate + 2 oxidized [2Fe-2S]-[ferredoxin] + H2O = (2E)-4-hydroxy-3-methylbut-2-enyl diphosphate + 2 reduced [2Fe-2S]-[ferredoxin] + 2 H(+). It participates in isoprenoid biosynthesis; dimethylallyl diphosphate biosynthesis; dimethylallyl diphosphate from (2E)-4-hydroxy-3-methylbutenyl diphosphate: step 1/1. It functions in the pathway isoprenoid biosynthesis; isopentenyl diphosphate biosynthesis via DXP pathway; isopentenyl diphosphate from 1-deoxy-D-xylulose 5-phosphate: step 6/6. Functionally, catalyzes the conversion of 1-hydroxy-2-methyl-2-(E)-butenyl 4-diphosphate (HMBPP) into a mixture of isopentenyl diphosphate (IPP) and dimethylallyl diphosphate (DMAPP). Acts in the terminal step of the DOXP/MEP pathway for isoprenoid precursor biosynthesis. This is 4-hydroxy-3-methylbut-2-enyl diphosphate reductase from Aromatoleum aromaticum (strain DSM 19018 / LMG 30748 / EbN1) (Azoarcus sp. (strain EbN1)).